The primary structure comprises 581 residues: Aspartate--tRNA ligase (581 aa).

E170 lines the L-aspartate pocket. An aspartate region spans residues Q194–K197. Residue R216 coordinates L-aspartate. Residues R216–E218 and Q225 each bind ATP. H440 provides a ligand contact to L-aspartate. E469 is a binding site for ATP. R476 contributes to the L-aspartate binding site. Position 521-524 (G521–R524) interacts with ATP.

Belongs to the class-II aminoacyl-tRNA synthetase family. Type 1 subfamily. Homodimer.

The protein resides in the cytoplasm. It carries out the reaction tRNA(Asp) + L-aspartate + ATP = L-aspartyl-tRNA(Asp) + AMP + diphosphate. Functionally, catalyzes the attachment of L-aspartate to tRNA(Asp) in a two-step reaction: L-aspartate is first activated by ATP to form Asp-AMP and then transferred to the acceptor end of tRNA(Asp). In Thermosipho africanus (strain TCF52B), this protein is Aspartate--tRNA ligase.